The primary structure comprises 588 residues: Glutamate--tRNA ligase (588 aa).

Residues 112 to 122 (PNPDFYLHLGS) carry the 'HIGH' region motif.

This sequence belongs to the class-I aminoacyl-tRNA synthetase family. Glutamate--tRNA ligase type 2 subfamily.

It is found in the cytoplasm. It carries out the reaction tRNA(Glu) + L-glutamate + ATP = L-glutamyl-tRNA(Glu) + AMP + diphosphate. Its function is as follows. Catalyzes the attachment of glutamate to tRNA(Glu) in a two-step reaction: glutamate is first activated by ATP to form Glu-AMP and then transferred to the acceptor end of tRNA(Glu). The sequence is that of Glutamate--tRNA ligase from Caldivirga maquilingensis (strain ATCC 700844 / DSM 13496 / JCM 10307 / IC-167).